An 887-amino-acid polypeptide reads, in one-letter code: Alanine--tRNA ligase (887 aa).

The Zn(2+) site is built by His-564, His-568, Cys-676, and His-680. The disordered stretch occupies residues 854-873 (GQGGGGRPDMAQSGGPKGNK).

Belongs to the class-II aminoacyl-tRNA synthetase family. It depends on Zn(2+) as a cofactor.

The protein localises to the cytoplasm. It carries out the reaction tRNA(Ala) + L-alanine + ATP = L-alanyl-tRNA(Ala) + AMP + diphosphate. In terms of biological role, catalyzes the attachment of alanine to tRNA(Ala) in a two-step reaction: alanine is first activated by ATP to form Ala-AMP and then transferred to the acceptor end of tRNA(Ala). Also edits incorrectly charged Ser-tRNA(Ala) and Gly-tRNA(Ala) via its editing domain. The polypeptide is Alanine--tRNA ligase (Bartonella henselae (strain ATCC 49882 / DSM 28221 / CCUG 30454 / Houston 1) (Rochalimaea henselae)).